The chain runs to 353 residues: Fe(3+) ions import ATP-binding protein FbpC (353 aa).

An ABC transporter domain is found at 9–239 (VVFENVRKTF…PASSFIADFM (231 aa)). 41-48 (GPSGCGKT) provides a ligand contact to ATP.

It belongs to the ABC transporter superfamily. Fe(3+) ion importer (TC 3.A.1.10) family. In terms of assembly, the complex is composed of two ATP-binding proteins (FbpC), two transmembrane proteins (FbpB) and a solute-binding protein (FbpA).

The protein resides in the cell inner membrane. The catalysed reaction is Fe(3+)(out) + ATP + H2O = Fe(3+)(in) + ADP + phosphate + H(+). Its function is as follows. Part of the ABC transporter complex FbpABC involved in Fe(3+) ions import. Responsible for energy coupling to the transport system. In Agrobacterium fabrum (strain C58 / ATCC 33970) (Agrobacterium tumefaciens (strain C58)), this protein is Fe(3+) ions import ATP-binding protein FbpC.